The sequence spans 359 residues: Type II methyltransferase M.HinfI (359 aa).

The RAMA domain occupies 275-358; the sequence is KVPMKTLIEA…LDSLRYEYTN (84 aa).

The protein belongs to the N(4)/N(6)-methyltransferase family.

It catalyses the reaction a 2'-deoxyadenosine in DNA + S-adenosyl-L-methionine = an N(6)-methyl-2'-deoxyadenosine in DNA + S-adenosyl-L-homocysteine + H(+). In terms of biological role, a beta subtype methylase that recognizes the double-stranded sequence 5'-GANTC-3', methylates A-2 on both strands, and protects the DNA from cleavage by the HinfI endonuclease. The protein is Type II methyltransferase M.HinfI (hinfIM) of Haemophilus influenzae.